Reading from the N-terminus, the 1295-residue chain is Phosphoribosylformylglycinamidine synthase (1295 aa).

The interval S302 to P327 is disordered. ATP is bound by residues G306–D317 and A677. Mg(2+) is bound by residues D678, E717, N721, and D884. S886 is a binding site for ATP. The 254-residue stretch at V1042–G1295 folds into the Glutamine amidotransferase type-1 domain. C1135 acts as the Nucleophile in catalysis. Active-site residues include H1260 and E1262.

In the N-terminal section; belongs to the FGAMS family. Monomer.

Its subcellular location is the cytoplasm. The enzyme catalyses N(2)-formyl-N(1)-(5-phospho-beta-D-ribosyl)glycinamide + L-glutamine + ATP + H2O = 2-formamido-N(1)-(5-O-phospho-beta-D-ribosyl)acetamidine + L-glutamate + ADP + phosphate + H(+). It functions in the pathway purine metabolism; IMP biosynthesis via de novo pathway; 5-amino-1-(5-phospho-D-ribosyl)imidazole from N(2)-formyl-N(1)-(5-phospho-D-ribosyl)glycinamide: step 1/2. Phosphoribosylformylglycinamidine synthase involved in the purines biosynthetic pathway. Catalyzes the ATP-dependent conversion of formylglycinamide ribonucleotide (FGAR) and glutamine to yield formylglycinamidine ribonucleotide (FGAM) and glutamate. The polypeptide is Phosphoribosylformylglycinamidine synthase (Photorhabdus laumondii subsp. laumondii (strain DSM 15139 / CIP 105565 / TT01) (Photorhabdus luminescens subsp. laumondii)).